The sequence spans 431 residues: Adenylosuccinate synthetase (431 aa).

GTP is bound by residues 12–18 (GDEGKGK) and 40–42 (GHT). The active-site Proton acceptor is Asp13. Residues Asp13 and Gly40 each coordinate Mg(2+). Residues 13-16 (DEGK), 38-41 (NAGH), Thr128, Arg142, Gln223, Thr238, and Arg301 contribute to the IMP site. His41 serves as the catalytic Proton donor. 297-303 (TVTGRPR) contributes to the substrate binding site. GTP is bound by residues Arg303, 329–331 (SID), and 411–413 (SVG).

It belongs to the adenylosuccinate synthetase family. As to quaternary structure, homodimer. Mg(2+) is required as a cofactor.

It localises to the cytoplasm. The catalysed reaction is IMP + L-aspartate + GTP = N(6)-(1,2-dicarboxyethyl)-AMP + GDP + phosphate + 2 H(+). It participates in purine metabolism; AMP biosynthesis via de novo pathway; AMP from IMP: step 1/2. Functionally, plays an important role in the de novo pathway of purine nucleotide biosynthesis. Catalyzes the first committed step in the biosynthesis of AMP from IMP. The polypeptide is Adenylosuccinate synthetase (Lacticaseibacillus casei (strain BL23) (Lactobacillus casei)).